We begin with the raw amino-acid sequence, 185 residues long: Ribose 1,5-bisphosphate phosphokinase PhnN (185 aa).

It belongs to the ribose 1,5-bisphosphokinase family.

The enzyme catalyses alpha-D-ribose 1,5-bisphosphate + ATP = 5-phospho-alpha-D-ribose 1-diphosphate + ADP. It participates in metabolic intermediate biosynthesis; 5-phospho-alpha-D-ribose 1-diphosphate biosynthesis; 5-phospho-alpha-D-ribose 1-diphosphate from D-ribose 5-phosphate (route II): step 3/3. In terms of biological role, catalyzes the phosphorylation of ribose 1,5-bisphosphate to 5-phospho-D-ribosyl alpha-1-diphosphate (PRPP). This is Ribose 1,5-bisphosphate phosphokinase PhnN from Escherichia coli (strain SMS-3-5 / SECEC).